A 227-amino-acid chain; its full sequence is MKPPIIIINFKAYENSFGDKAVNLGKKIEKISKEYSVEIILSTPATMIYRMSQEVDLPIYAEHVDPVPLGAFTGAILPEMVKDAGAKGTLINHSERRLRADEIDDVLKRTKKLGLKSILCVDRYELVYPFSLLKPDAILIEPPELIGTGVSVSKAKPEVITRAVDEIRKSEGIYLIAGAGITTGEDVYKALKLGAHGIGVASAVMKAKEPEKVVEDFITSALRAISS.

9-11 (NFK) contributes to the substrate binding site. The active-site Electrophile is H93. Residue E141 is the Proton acceptor of the active site. Residues I146, G180, and 201–202 (AS) each bind substrate.

The protein belongs to the triosephosphate isomerase family. Homotetramer; dimer of dimers.

It is found in the cytoplasm. The enzyme catalyses D-glyceraldehyde 3-phosphate = dihydroxyacetone phosphate. Its pathway is carbohydrate biosynthesis; gluconeogenesis. It functions in the pathway carbohydrate degradation; glycolysis; D-glyceraldehyde 3-phosphate from glycerone phosphate: step 1/1. Involved in the gluconeogenesis. Catalyzes stereospecifically the conversion of dihydroxyacetone phosphate (DHAP) to D-glyceraldehyde-3-phosphate (G3P). The polypeptide is Triosephosphate isomerase (Saccharolobus solfataricus (strain ATCC 35092 / DSM 1617 / JCM 11322 / P2) (Sulfolobus solfataricus)).